The sequence spans 758 residues: Vitamin K-dependent gamma-carboxylase (758 aa).

The segment at 1–31 (MAVSARSARSPPDSDKVQKDKAGQTSGRRQG) is disordered. Alanine 2 bears the N-acetylalanine mark. Topologically, residues 2–60 (AVSARSARSPPDSDKVQKDKAGQTSGRRQGSRMGKLLGFEWTDVSSWGKLVTLLNRPTD) are cytoplasmic. The segment covering 12-22 (PDSDKVQKDKA) has biased composition (basic and acidic residues). A helical transmembrane segment spans residues 61-81 (PASLAVFRFLFGLMMVLDIPQ). Residues 82–113 (ERGLSSLDRRYLDGLEVCRFPLLDALQPLPLD) lie on the Lumenal side of the membrane. A disulfide bond links cysteine 99 and cysteine 450. Residues 114–134 (WMYLVYTIMFLGALGMMLGLR) form a helical membrane-spanning segment. The Cytoplasmic segment spans residues 135–136 (YR). Residues 137 to 157 (ISCVLFLLPYWYVFLLDKTSW) traverse the membrane as a helical segment. The Lumenal portion of the chain corresponds to 158-292 (NNHSYLYGLL…VSYFHCMNSQ (135 aa)). A helical transmembrane segment spans residues 293 to 313 (LFSIGMFPYVMLASSPLFCSP). Topologically, residues 314–361 (EWPRKLVAHCPKRLQELLPLRTAPQPSASCVYKRSRAKGGQKPGLRHR) are cytoplasmic. A helical membrane pass occupies residues 362 to 382 (LGAAFTLLYLLEQLFLPYSHF). At 383 to 758 (LTQGYNNWTN…PNADAVHSEF (376 aa)) the chain is on the lumenal side. The segment at 727-758 (PFEPVGEPSPSNTDSSNPNPSEPNADAVHSEF) is disordered. The span at 734-750 (PSPSNTDSSNPNPSEPN) shows a compositional bias: low complexity.

Belongs to the vitamin K-dependent gamma-carboxylase family. In terms of assembly, monomer. May interact with CALU.

It localises to the endoplasmic reticulum membrane. The enzyme catalyses 4-carboxy-L-glutamyl-[protein] + 2,3-epoxyphylloquinone + H2O + H(+) = phylloquinol + L-glutamyl-[protein] + CO2 + O2. Its function is as follows. Mediates the vitamin K-dependent carboxylation of glutamate residues to calcium-binding gamma-carboxyglutamate (Gla) residues with the concomitant conversion of the reduced hydroquinone form of vitamin K to vitamin K epoxide. Catalyzes gamma-carboxylation of various proteins, such as blood coagulation factors (F2, F7, F9 and F10), osteocalcin (BGLAP) or matrix Gla protein (MGP). The protein is Vitamin K-dependent gamma-carboxylase (GGCX) of Delphinapterus leucas (Beluga whale).